Reading from the N-terminus, the 191-residue chain is Peptidyl-tRNA hydrolase (191 aa).

Y17 is a binding site for tRNA. H22 acts as the Proton acceptor in catalysis. TRNA is bound by residues Y68, N70, and N116.

This sequence belongs to the PTH family. As to quaternary structure, monomer.

Its subcellular location is the cytoplasm. It catalyses the reaction an N-acyl-L-alpha-aminoacyl-tRNA + H2O = an N-acyl-L-amino acid + a tRNA + H(+). Functionally, hydrolyzes ribosome-free peptidyl-tRNAs (with 1 or more amino acids incorporated), which drop off the ribosome during protein synthesis, or as a result of ribosome stalling. Its function is as follows. Catalyzes the release of premature peptidyl moieties from peptidyl-tRNA molecules trapped in stalled 50S ribosomal subunits, and thus maintains levels of free tRNAs and 50S ribosomes. In Francisella tularensis subsp. tularensis (strain FSC 198), this protein is Peptidyl-tRNA hydrolase.